Reading from the N-terminus, the 326-residue chain is Ig gamma-1 chain C region (326 aa).

The interval Ala1–Ile97 is CH1. The cysteines at positions 27 and 82 are disulfide-linked. The tract at residues Val98–Thr112 is hinge. The segment at Gly113–Glu219 is CH2. Cystine bridges form between Cys140–Cys200 and Cys246–Cys304. Asn176 carries N-linked (GlcNAc...) asparagine glycosylation. The tract at residues Gly220–Lys326 is CH3.

The chain is Ig gamma-1 chain C region from Rattus norvegicus (Rat).